We begin with the raw amino-acid sequence, 245 residues long: MSSNHQHFRQPAIKGGESRVLSRRAILTADSLTLFYEDKKVIDNVSFSVKFGEIVTILGPNGGGKTSLVRVLVGINKAYKGTVRYFGKLGIGYLPQNIKINRLMPMTVEYFLLHTYLGRRAASDLEDSMKYVDVERLLKRQVAELSAGETQLVLLARCLMMKPDLIILDEPVSCMDIEAKHNFYKLVARLVTECGVSVLMTSHDLHCVMSCSDRVICVNHSIRCEGTPEEITENAKFLSVFPNNV.

An ABC transporter domain is found at 27 to 244 (LTADSLTLFY…AKFLSVFPNN (218 aa)). 59–66 (GPNGGGKT) contacts ATP.

It belongs to the ABC transporter superfamily. Zinc importer (TC 3.A.1.15.5) family. As to quaternary structure, the complex is composed of two ATP-binding proteins (ZnuC), two transmembrane proteins (ZnuB) and a solute-binding protein (ZnuA).

It is found in the cell inner membrane. It catalyses the reaction Zn(2+)(out) + ATP(in) + H2O(in) = Zn(2+)(in) + ADP(in) + phosphate(in) + H(+)(in). In terms of biological role, part of the ABC transporter complex ZnuABC involved in zinc import. Responsible for energy coupling to the transport system. The protein is Zinc import ATP-binding protein ZnuC of Anaplasma marginale (strain St. Maries).